The primary structure comprises 1142 residues: Protein lin-25 (1142 aa).

The span at 600–613 shows a compositional bias: acidic residues; it reads IEEEIEEEEEDIEP. The tract at residues 600–706 is disordered; sequence IEEEIEEEEE…EKPKEPLEPT (107 aa). Basic and acidic residues-rich tracts occupy residues 614–627, 652–662, and 679–703; these read EVVK…TEKE, DEQKTEEKMDT, and DPPK…KEPL.

Its subcellular location is the nucleus. The protein localises to the cytoplasm. Participates in the inductive signaling pathway downstream of let-60 Ras and the RAF/MAP kinase cascade to regulate specification and differentiation of many cell types. Positively regulates the fate of vulval precursor cells. Required for induction of the P12 and excretory duct cell fates. In males, it is also required for proper formation of spicules. Does not function in the signaling pathway that promotes exit from pachytene. In Caenorhabditis briggsae, this protein is Protein lin-25.